The primary structure comprises 880 residues: MVKILEKIFGTKNERELKRYFTIVEDINRLESQISSLSDEKLKQKTDEFRERLAKGESLDDILKEAFAVVREVAKRTLGMRHFDVQLVGGLVLHEGKIAEMKTGEGKTLVATLAAYLNALEGKGVHIVTVNDYLARRDVQWMGAIYNFLGLSVGVIQPDASFLYDPNYRLPDRRFDRLRPCSKKEAYLADITYGTNNEFGFDYLRDNMRYSIDELCQRELNYAIVDEVDSILIDEARTPLIISGPSEESTDIYYAVNRIIKYLKPENDFKLDEKLKTVVLTEQGSQKAEKLLGIDNLYNPSNIQVVHHINQAIRAHYFFKKEVDYVVKDGKIVIVDEFTGRLLEGRRWSDGLHQAIEAKEGLKIEAENQTLATITFQNYFRMYKKLAGMTGTADTEASEFAEIYNLEVVVIPTHKPMIREDYPDAVYKTEKAKYEAVVKEIEECYKVGRPVLVGTTSIEKSELISKMLKKKGVPHNVLNAKYHDKEAEIVAQAGRIGAVTIATNMAGRGTDILLGGNPEFLAREMLAGKDYTEEEYKKALEKAKEICKEEHDKVVSLGGLHIIGTERHESRRIDNQLRGRAGRQGDPGSSRFYLSLEDELLRLFGGERLQSLMHFLKIEDDTPIENKMVSKAIENAQKRVEAHNFDIRKHLLKYDDVMNSQRNEIYSFRKEVLESDSLKDKVFELLEIEIDEMVDFYLAQESEGVEKLKEQLSARFDIEVDLSNKSKDEIKEYLLEKLREAYEKKEQKIGQELMRDVEKMIFLHVIDTKWKDHLLGIDHIKEGIGLRGYAQRDPLVEYKKEAFELFEEMSRNIISDILTRLFKIQIKEESQVKVARAQKIQRSDGDGARRPVEKPKKIGRNDPCPCGSGKKYKKCCGKNS.

ATP-binding positions include Q86, 104–108 (GEGKT), and D511. Positions 837-871 (AQKIQRSDGDGARRPVEKPKKIGRNDPCPCGSGKK) are disordered. Residues 841 to 860 (QRSDGDGARRPVEKPKKIGR) show a composition bias toward basic and acidic residues. Zn(2+) is bound by residues C864, C866, C875, and C876.

It belongs to the SecA family. Monomer and homodimer. Part of the essential Sec protein translocation apparatus which comprises SecA, SecYEG and auxiliary proteins SecDF. Other proteins may also be involved. Requires Zn(2+) as cofactor.

The protein localises to the cell inner membrane. It localises to the cytoplasm. It carries out the reaction ATP + H2O + cellular proteinSide 1 = ADP + phosphate + cellular proteinSide 2.. Its function is as follows. Part of the Sec protein translocase complex. Interacts with the SecYEG preprotein conducting channel. Has a central role in coupling the hydrolysis of ATP to the transfer of proteins into and across the cell membrane, serving as an ATP-driven molecular motor driving the stepwise translocation of polypeptide chains across the membrane. The chain is Protein translocase subunit SecA from Thermodesulfovibrio yellowstonii (strain ATCC 51303 / DSM 11347 / YP87).